The following is a 280-amino-acid chain: Succinate dehydrogenase [ubiquinone] iron-sulfur subunit 2, mitochondrial (280 aa).

Residues Met1–Trp28 constitute a mitochondrion transit peptide. The 2Fe-2S ferredoxin-type domain maps to Phe51–Met140. [2Fe-2S] cluster is bound by residues Cys101, Cys106, and Cys121. The 31-residue stretch at Asp183–Tyr213 folds into the 4Fe-4S ferredoxin-type domain. The [4Fe-4S] cluster site is built by Cys193, Cys196, and Cys199. A [3Fe-4S] cluster-binding site is contributed by Cys203. Trp208 provides a ligand contact to a ubiquinone. Residues Cys250 and Cys256 each contribute to the [3Fe-4S] cluster site. A [4Fe-4S] cluster-binding site is contributed by Cys260.

The protein belongs to the succinate dehydrogenase/fumarate reductase iron-sulfur protein family. In terms of assembly, component of complex II composed of eight subunits in plants: four classical SDH subunits SDH1, SDH2, SDH3 and SDH4 (a flavoprotein (FP), an iron-sulfur protein (IP), and a cytochrome b composed of a large and a small subunit.), as well as four subunits unknown in mitochondria from bacteria and heterotrophic eukaryotes. Requires [2Fe-2S] cluster as cofactor. [3Fe-4S] cluster serves as cofactor. The cofactor is [4Fe-4S] cluster. As to expression, ubiquitous. Preferentially expressed in flowers, inflorescences and root tips.

It localises to the mitochondrion inner membrane. It catalyses the reaction a quinone + succinate = fumarate + a quinol. It participates in carbohydrate metabolism; tricarboxylic acid cycle; fumarate from succinate (eukaryal route): step 1/1. Iron-sulfur protein (IP) subunit of succinate dehydrogenase (SDH) that is involved in complex II of the mitochondrial electron transport chain and is responsible for transferring electrons from succinate to ubiquinone (coenzyme Q). This Arabidopsis thaliana (Mouse-ear cress) protein is Succinate dehydrogenase [ubiquinone] iron-sulfur subunit 2, mitochondrial (SDH2-2).